The chain runs to 502 residues: 1-aminocyclopropane-1-carboxylate synthase-like protein 1 (502 aa).

Positions 15–35 (CPGSDSIQDLPSNKGDGLERE) are disordered. Glu106 contributes to the substrate binding site. Lys324 bears the N6-(pyridoxal phosphate)lysine mark.

It belongs to the class-I pyridoxal-phosphate-dependent aminotransferase family.

In terms of biological role, does not catalyze the synthesis of 1-aminocyclopropane-1-carboxylate but is capable of catalyzing the deamination of L-vinylglycine. This Bos taurus (Bovine) protein is 1-aminocyclopropane-1-carboxylate synthase-like protein 1 (ACCS).